Consider the following 375-residue polypeptide: Methylthioribose-1-phosphate isomerase (375 aa).

Residue D259 is the Proton donor of the active site.

The protein belongs to the eIF-2B alpha/beta/delta subunits family. MtnA subfamily.

The protein localises to the cytoplasm. It is found in the nucleus. The catalysed reaction is 5-(methylsulfanyl)-alpha-D-ribose 1-phosphate = 5-(methylsulfanyl)-D-ribulose 1-phosphate. It functions in the pathway amino-acid biosynthesis; L-methionine biosynthesis via salvage pathway; L-methionine from S-methyl-5-thio-alpha-D-ribose 1-phosphate: step 1/6. In terms of biological role, catalyzes the interconversion of methylthioribose-1-phosphate (MTR-1-P) into methylthioribulose-1-phosphate (MTRu-1-P). The chain is Methylthioribose-1-phosphate isomerase from Populus trichocarpa (Western balsam poplar).